A 174-amino-acid polypeptide reads, in one-letter code: Gamma-crystallin S (174 aa).

Beta/gamma crystallin 'Greek key' domains are found at residues 2–40 and 41–83; these read GRII…RVES and GAWV…KMIH. Residues 84–89 form a connecting peptide region; sequence FVSGSE. Beta/gamma crystallin 'Greek key' domains are found at residues 90–130 and 131–173; these read YKIQ…KVLD and GIWI…KRLM.

It belongs to the beta/gamma-crystallin family.

In terms of biological role, crystallins are the dominant structural components of the vertebrate eye lens. In Cyprinus carpio (Common carp), this protein is Gamma-crystallin S (crygs).